The sequence spans 26 residues: AMP deaminase 1 (26 aa).

It belongs to the metallo-dependent hydrolases superfamily. Adenosine and AMP deaminases family. In terms of assembly, homotetramer. The cofactor is Zn(2+).

It catalyses the reaction AMP + H2O + H(+) = IMP + NH4(+). The protein operates within purine metabolism; IMP biosynthesis via salvage pathway; IMP from AMP: step 1/1. In terms of biological role, AMP deaminase plays a critical role in energy metabolism. The sequence is that of AMP deaminase 1 (AMPD1) from Oryctolagus cuniculus (Rabbit).